Consider the following 206-residue polypeptide: Geminin (206 aa).

Positions 1 to 18 (MNLSMKQKQEGAQENVKN) are enriched in polar residues. Residues 1–42 (MNLSMKQKQEGAQENVKNSPVPRRTLKMIQPSADGSLVGREN) are disordered. The residue at position 27 (Lys-27) is an N6-acetyllysine. A phosphoserine mark is found at Ser-36, Ser-63, and Ser-64. The segment at 79-158 (TQEAFDLISK…AEVIERLSNE (80 aa)) is necessary and sufficient for interaction with IDAS and CDT1. Residues 91 to 141 (PSSQYWKEVAEQRRKALYEALKENEKLHKEIEQKDSEIARLRKENKDLAEV) are a coiled coil. Residues 157-206 (NEPLDNFESPDSQEFDSEEEAVEYSELEDSGAGTCAEETVSSSTDARPCT) form a disordered region. A compositionally biased stretch (acidic residues) spans 167 to 185 (DSQEFDSEEEAVEYSELED). A homeodomain binding region spans residues 167-187 (DSQEFDSEEEAVEYSELEDSG). Ser-181 is subject to Phosphoserine; by CK2. A compositionally biased stretch (polar residues) spans 195 to 206 (TVSSSTDARPCT).

Belongs to the geminin family. As to quaternary structure, homotetramer. Interacts with CDT1; this inhibits binding of the MCM complex to origins of replication. The complex with CDT1 exists in two forms, a 'permissive' heterotrimer and an 'inhibitory' heterohexamer. Interacts (via coiled-coil domain) with IDAS (via coiled-coil domain); this targets GMNN to the nucleus. The heterodimer formed by GMNN and MCIDAS has much lower affinity for CDT1 than the GMNN homodimer. Interacts with a subset of Hox proteins, affinity increasing from anterior to posterior types, the strongest interaction being with HOXB1, HOXC9 and HOXD10. Interacts with LRWD1 from G1/S to mitosis. In terms of processing, phosphorylated during mitosis. Phosphorylation at Ser-181 by CK2 results in enhanced binding to Hox proteins and more potent inhibitory effect on Hox transcriptional activity.

The protein localises to the cytoplasm. The protein resides in the nucleus. In terms of biological role, inhibits DNA replication by preventing the incorporation of MCM complex into pre-replication complex (pre-RC). It is degraded during the mitotic phase of the cell cycle. Its destruction at the metaphase-anaphase transition permits replication in the succeeding cell cycle. Inhibits histone acetyltransferase activity of KAT7/HBO1 in a CDT1-dependent manner, inhibiting histone H4 acetylation and DNA replication licensing. Inhibits the transcriptional activity of a subset of Hox proteins, enrolling them in cell proliferative control. This is Geminin (Gmnn) from Mus musculus (Mouse).